Consider the following 304-residue polypeptide: UDP-3-O-acyl-N-acetylglucosamine deacetylase (304 aa).

3 residues coordinate Zn(2+): His78, His237, and Asp241. His264 functions as the Proton donor in the catalytic mechanism.

It belongs to the LpxC family. Zn(2+) is required as a cofactor.

It carries out the reaction a UDP-3-O-[(3R)-3-hydroxyacyl]-N-acetyl-alpha-D-glucosamine + H2O = a UDP-3-O-[(3R)-3-hydroxyacyl]-alpha-D-glucosamine + acetate. It functions in the pathway glycolipid biosynthesis; lipid IV(A) biosynthesis; lipid IV(A) from (3R)-3-hydroxytetradecanoyl-[acyl-carrier-protein] and UDP-N-acetyl-alpha-D-glucosamine: step 2/6. Functionally, catalyzes the hydrolysis of UDP-3-O-myristoyl-N-acetylglucosamine to form UDP-3-O-myristoylglucosamine and acetate, the committed step in lipid A biosynthesis. This is UDP-3-O-acyl-N-acetylglucosamine deacetylase from Marinobacter nauticus (strain ATCC 700491 / DSM 11845 / VT8) (Marinobacter aquaeolei).